We begin with the raw amino-acid sequence, 595 residues long: Probable hydrolase M10 (595 aa).

The N-terminal stretch at 1-23 (MRFTSTILLRVAVLLSLGGGSQT) is a signal peptide. N-linked (GlcNAc...) asparagine glycosylation is found at N59, N87, N266, N436, N457, and N561.

Belongs to the beta-lactamase family.

It participates in secondary metabolite biosynthesis. Its function is as follows. Probable hydrolase; part of the gene cluster that mediates the biosynthesis of squalestatin S1 (SQS1, also known as zaragozic acid A), a heavily oxidized fungal polyketide that offers potent cholesterol lowering activity by targeting squalene synthase (SS). SQS1 is composed of a 2,8-dioxobicyclic[3.2.1]octane-3,4,5-tricarboxyclic acid core that is connected to two lipophilic polyketide arms. These initial steps feature the priming of an unusual benzoic acid starter unit onto the highly reducing polyketide synthase pks2, followed by oxaloacetate extension and product release to generate a tricarboxylic acid containing product. The phenylalanine ammonia lyase (PAL) M7 and the acyl-CoA ligase M9 are involved in transforming phenylalanine into benzoyl-CoA. The citrate synthase-like protein R3 is involved in connecting the C-alpha-carbons of the hexaketide chain and oxaloacetate to afford the tricarboxylic acid unit. The potential hydrolytic enzymes, M8 and M10, are in close proximity to pks2 and may participate in product release. On the other side, the tetraketide arm is synthesized by a the squalestatin tetraketide synthase pks1 and enzymatically esterified to the core in the last biosynthetic step, by the acetyltransferase M4. The biosynthesis of the tetraketide must involve 3 rounds of chain extension. After the first and second rounds methyl-transfer occurs, and in all rounds of extension the ketoreductase and dehydratase are active. The enoyl reductase and C-MeT of pks1 are not active in the final round of extension. The acetyltransferase M4 appears to have a broad substrate selectivity for its acyl CoA substrate, allowing the in vitro synthesis of novel squalestatins. The biosynthesis of SQS1 requires several oxidative steps likely performed by oxidoreductases M1, R1 and R2. Finally, in support of the identification of the cluster as being responsible for SQS1 production, the cluster contains a gene encoding a putative squalene synthase (SS) R6, suggesting a likely mechanism for self-resistance. In Phoma sp. (strain ATCC 20986 / MF5453), this protein is Probable hydrolase M10.